A 116-amino-acid chain; its full sequence is Large ribosomal subunit protein eL18 (116 aa).

Belongs to the eukaryotic ribosomal protein eL18 family. Part of the 50S ribosomal subunit. Interacts weakly with proteins L4 and L15. Has been cross-linked to L4.

In terms of biological role, stabilizes the tertiary rRNA structure within the 23S rRNA domain (domain II) to which it binds. The sequence is that of Large ribosomal subunit protein eL18 (rpl18e) from Haloarcula marismortui (strain ATCC 43049 / DSM 3752 / JCM 8966 / VKM B-1809) (Halobacterium marismortui).